Reading from the N-terminus, the 582-residue chain is Sorting nexin-4 (582 aa).

The segment covering 1-11 (MSSDDQFTSIQ) has biased composition (polar residues). Residues 1–111 (MSSDDQFTSI…VNQEPSSDSQ (111 aa)) are disordered. 2 stretches are compositionally biased toward basic and acidic residues: residues 12–27 (WDRDELGPNKETKVNK) and 35–54 (DEHHNNDNEDKDNDTTKSNE). The segment covering 57–70 (NIQEDDETKDDNEP) has biased composition (acidic residues). Positions 116–249 (EINVVVTSPL…HLFVSDSADW (134 aa)) constitute a PX domain. Residues Arg171, Lys197, and Arg216 each coordinate a 1,2-diacyl-sn-glycero-3-phospho-(1D-myo-inositol-3-phosphate). Coiled-coil stretches lie at residues 300-329 (SKHKRETNKEILEISDKLKKLYENLIKLDK) and 494-529 (SSVTESKVTKLQNRITELENEISVQSQLVLDLTNKI).

It belongs to the sorting nexin family.

The protein resides in the cytoplasm. It is found in the cytosol. It localises to the preautophagosomal structure membrane. The protein localises to the endosome membrane. Sorting nexin, involved in the separation or division of vacuoles throughout the entire life cycle of the cells. Involved in retrieval of late-Golgi SNAREs from post-Golgi endosomes to the trans-Golgi network, for cytoplasm to vacuole transport (Cvt), and autophagy of large cargos including mitophagy, pexophagy and glycophagy. In Debaryomyces hansenii (strain ATCC 36239 / CBS 767 / BCRC 21394 / JCM 1990 / NBRC 0083 / IGC 2968) (Yeast), this protein is Sorting nexin-4 (SNX4).